A 437-amino-acid polypeptide reads, in one-letter code: MTVLRSMKDFSSMNITASILLFVTAIAAAVIANSPAASVYQEFLSHELHFRIGGFNLLSHAGHNLTMIEFINDGLMTIFFLMVGLEIKRELLVGELSSFRKAALPFIAACGGMVVPVVIYSMVCAPGTEGGQGLAIPMATDIAFSLGVLSLLGKRVPLSLKIFLTAFAVVDDIGGILVIAIFYSSHVAYEYLLWAALLYVLLYFIGKKGATNKIFFLVVGVVIWYLFLQSGIHSTISGVILAFVIPAKPQLNVGTYIERIRRIISTFPEMGANNIVLTNQQIAKLKEVESASDRVISPLQSLEDNLHGAVNYLVLPLFAFVNAGVMFSGEGEVIGGVTLAVALGLLAGKFLGIYSFTWLAVKSGLTPMPLGMNWKNISGVALLGGIGFTVSLFIANLSFGSAHPVLLNQAKLGVLSGTVMAGILGYLVLHWVLPKRR.

11 helical membrane passes run 12-32 (SMNITASILLFVTAIAAAVIA), 65-85 (LTMIEFINDGLMTIFFLMVGL), 103-123 (ALPFIAACGGMVVPVVIYSMV), 133-153 (GLAIPMATDIAFSLGVLSLLG), 162-182 (IFLTAFAVVDDIGGILVIAIF), 186-206 (HVAYEYLLWAALLYVLLYFIG), 214-234 (IFFLVVGVVIWYLFLQSGIHS), 308-328 (GAVNYLVLPLFAFVNAGVMFS), 333-353 (VIGGVTLAVALGLLAGKFLGI), 377-397 (ISGVALLGGIGFTVSLFIANL), and 412-432 (LGVLSGTVMAGILGYLVLHWV).

The protein belongs to the NhaA Na(+)/H(+) (TC 2.A.33) antiporter family.

It localises to the cell inner membrane. It carries out the reaction Na(+)(in) + 2 H(+)(out) = Na(+)(out) + 2 H(+)(in). Na(+)/H(+) antiporter that extrudes sodium in exchange for external protons. The sequence is that of Na(+)/H(+) antiporter NhaA from Bacteroides fragilis (strain ATCC 25285 / DSM 2151 / CCUG 4856 / JCM 11019 / LMG 10263 / NCTC 9343 / Onslow / VPI 2553 / EN-2).